The sequence spans 388 residues: Succinate--CoA ligase [ADP-forming] subunit beta (388 aa).

The ATP-grasp domain occupies 9-244; sequence KEILRKFGVA…LDEEDPAEIE (236 aa). ATP-binding positions include lysine 46, 53–55, glutamate 99, alanine 102, and glutamate 107; that span reads GRG. Mg(2+) is bound by residues asparagine 199 and aspartate 213. Substrate contacts are provided by residues asparagine 264 and 321-323; that span reads GIM.

This sequence belongs to the succinate/malate CoA ligase beta subunit family. As to quaternary structure, heterotetramer of two alpha and two beta subunits. Mg(2+) is required as a cofactor.

It catalyses the reaction succinate + ATP + CoA = succinyl-CoA + ADP + phosphate. The enzyme catalyses GTP + succinate + CoA = succinyl-CoA + GDP + phosphate. The protein operates within carbohydrate metabolism; tricarboxylic acid cycle; succinate from succinyl-CoA (ligase route): step 1/1. In terms of biological role, succinyl-CoA synthetase functions in the citric acid cycle (TCA), coupling the hydrolysis of succinyl-CoA to the synthesis of either ATP or GTP and thus represents the only step of substrate-level phosphorylation in the TCA. The beta subunit provides nucleotide specificity of the enzyme and binds the substrate succinate, while the binding sites for coenzyme A and phosphate are found in the alpha subunit. In Burkholderia vietnamiensis (strain G4 / LMG 22486) (Burkholderia cepacia (strain R1808)), this protein is Succinate--CoA ligase [ADP-forming] subunit beta.